A 218-amino-acid chain; its full sequence is Pyridoxine/pyridoxamine 5'-phosphate oxidase (218 aa).

Substrate is bound by residues 14–17 (RREY) and Lys-72. Residues 67 to 72 (RIVLLK), 82 to 83 (YT), Arg-88, Lys-89, and Gln-111 contribute to the FMN site. Tyr-129, Arg-133, and Ser-137 together coordinate substrate. Residues 146 to 147 (QS) and Trp-191 contribute to the FMN site. 197 to 199 (RLH) contributes to the substrate binding site. Arg-201 provides a ligand contact to FMN.

The protein belongs to the pyridoxamine 5'-phosphate oxidase family. Homodimer. It depends on FMN as a cofactor.

The catalysed reaction is pyridoxamine 5'-phosphate + O2 + H2O = pyridoxal 5'-phosphate + H2O2 + NH4(+). It carries out the reaction pyridoxine 5'-phosphate + O2 = pyridoxal 5'-phosphate + H2O2. Its pathway is cofactor metabolism; pyridoxal 5'-phosphate salvage; pyridoxal 5'-phosphate from pyridoxamine 5'-phosphate: step 1/1. The protein operates within cofactor metabolism; pyridoxal 5'-phosphate salvage; pyridoxal 5'-phosphate from pyridoxine 5'-phosphate: step 1/1. In terms of biological role, catalyzes the oxidation of either pyridoxine 5'-phosphate (PNP) or pyridoxamine 5'-phosphate (PMP) into pyridoxal 5'-phosphate (PLP). In Escherichia coli O45:K1 (strain S88 / ExPEC), this protein is Pyridoxine/pyridoxamine 5'-phosphate oxidase.